A 560-amino-acid chain; its full sequence is Chaperonin GroEL 2 (560 aa).

ATP is bound by residues 29-32 (TLGP), 86-90 (DGTTT), glycine 413, 478-480 (NAA), and aspartate 494.

It belongs to the chaperonin (HSP60) family. As to quaternary structure, forms a cylinder of 14 subunits composed of two heptameric rings stacked back-to-back. Interacts with the co-chaperonin GroES.

The protein localises to the cytoplasm. It carries out the reaction ATP + H2O + a folded polypeptide = ADP + phosphate + an unfolded polypeptide.. In terms of biological role, together with its co-chaperonin GroES, plays an essential role in assisting protein folding. The GroEL-GroES system forms a nano-cage that allows encapsulation of the non-native substrate proteins and provides a physical environment optimized to promote and accelerate protein folding. The protein is Chaperonin GroEL 2 of Nostoc sp. (strain PCC 7120 / SAG 25.82 / UTEX 2576).